The primary structure comprises 152 residues: Methylglyoxal synthase (152 aa).

Residues 1–152 (MELTTRTIAA…YDRYLQQRLK (152 aa)) form the MGS-like domain. Residues H19, K23, 45–48 (TGTT), and 65–66 (SG) each bind substrate. Catalysis depends on D71, which acts as the Proton donor/acceptor. A substrate-binding site is contributed by H98.

Belongs to the methylglyoxal synthase family.

The enzyme catalyses dihydroxyacetone phosphate = methylglyoxal + phosphate. Functionally, catalyzes the formation of methylglyoxal from dihydroxyacetone phosphate. The polypeptide is Methylglyoxal synthase (Yersinia enterocolitica serotype O:8 / biotype 1B (strain NCTC 13174 / 8081)).